The primary structure comprises 879 residues: MATVGEYDVDGEFPCYTYEYSKGFTKLMYLIITEKNNPNGHKNIVSYLSDKKNVKSINQKNKKGYTALSIAVRNCGNWCSYKTVRILLEKGAKTNIKNNEGITPLIFASFNSRFCEGFNVINLLLKYGADINARDNNGYTALMNASSNSNSSSTYTTVKLLLDNDANIDDKDKNGLTCLMHACNNVTLKSSIGTIELLLYYGADINAVDNNGRTALMHACDNSNNIELIELLLNRGADIEAVDYKGLTCLMIASKYAGSINSVEVVEILINRGANIEARNEKLRTPLMYACKYSHNNTSVIKLLLDKGANIETTDLRNNTALILASTYSSSVEPIKLLLDKGANINHTNDEGCNALNLACINSSYNNNSEIVKLLIDRGSNINNMDSERTILTSTCEFIGKGSNIDTVKILLDNNADPNIPNTNGNTTLLYMCKKYIKDGPKKRDLNFNVIKLLLDYKANPNFINKKNENSLTRLSKYSDKVDIEIIKLLLDYGVDINSTNNYCNSALLLFCMDLQNSCTKISYNCKNIVKLLLEKGADVNIINSNGNTALSIICESDDNNLSDIIELLLAHNANPNTINKEEYTPLMHLIERFDYFLTNSKSIPQNIESDSDSDSMSGFESYRGFSQSSKSVNKYNLDKIEKNKNEPEINYRQKNLEMLLKHKTTKINFQNSSGITALLHECQVSDNIEPIKLLLDNGADPNIQDEKGETALHKAVRHTNKIDVIKLLMDYHANPYIFRNKGQDLLSYAFKKSSRRNFVNIAKNLINNPCHVLSDENRSQIFESKDKENIISIIKMLEYNAKIKAKFDVTIDLMPQIATQIIYNHKSLRARLLKLKWLYMCGDIDKIITLENFELFDYLCVENMYQLHDKIIGISDHI.

17 ANK repeats span residues K22–K62, K63–I96, E100–A133, N137–D170, N174–A207, N211–A241, K245–A278, K282–T313, R317–H347, E351–N384, S387–I420, N424–F463, N470–S499, S506–I542, N546–T578, S674–I704, and K708–I738.

The chain is Putative ankyrin repeat protein L88 from Acanthamoeba polyphaga mimivirus (APMV).